The chain runs to 366 residues: Ribosomal RNA large subunit methyltransferase M (366 aa).

S-adenosyl-L-methionine-binding positions include Ser-188, 221–224 (CPGG), Asp-240, Asp-260, and Asp-277. Catalysis depends on Lys-306, which acts as the Proton acceptor.

The protein belongs to the class I-like SAM-binding methyltransferase superfamily. RNA methyltransferase RlmE family. RlmM subfamily. As to quaternary structure, monomer.

It localises to the cytoplasm. The catalysed reaction is cytidine(2498) in 23S rRNA + S-adenosyl-L-methionine = 2'-O-methylcytidine(2498) in 23S rRNA + S-adenosyl-L-homocysteine + H(+). In terms of biological role, catalyzes the 2'-O-methylation at nucleotide C2498 in 23S rRNA. This Salmonella arizonae (strain ATCC BAA-731 / CDC346-86 / RSK2980) protein is Ribosomal RNA large subunit methyltransferase M.